The following is a 404-amino-acid chain: MLKYEYILVRYGEMTTKGKNRSKFVSTLKDNVKFKLKKFPNIKIDATHDRMYIQLNGEDHEAVSERLKDVFGIHKFNLAMKVPSELEDIKEGALAAFLQVKGDVKTFKITVHRSYKRFPMRTMELLPEIGGHILENTEDITVDVHNPDVNVRVEIRSGYSYIMCDERMGAGGLPVGVGGKVMVLLSGGIDSPVAAYLTMKRGVSVEAVHFHSPPFTSERAKQKVIDLAQELTKYCKRVTLHLVPFTEVQKTINKEIPSSYSMTVMRRMMMRITERIAEERNALAITTGESLGQVASQTLDSMHTINEVTNYPVIRPLITMDKLEIIKIAEEIGTYDISIRPYEDCCTVFTPASPATKPKREKANRFEAKYDFTPLIDEAVANKETMVLQTVEVVAEEEKFEELF.

In terms of domain architecture, THUMP spans 61–166 (EAVSERLKDV…SGYSYIMCDE (106 aa)). Residues 184–185 (LL), 209–210 (HF), arginine 266, glycine 288, and glutamine 297 each bind ATP.

Belongs to the ThiI family.

Its subcellular location is the cytoplasm. The catalysed reaction is [ThiI sulfur-carrier protein]-S-sulfanyl-L-cysteine + a uridine in tRNA + 2 reduced [2Fe-2S]-[ferredoxin] + ATP + H(+) = [ThiI sulfur-carrier protein]-L-cysteine + a 4-thiouridine in tRNA + 2 oxidized [2Fe-2S]-[ferredoxin] + AMP + diphosphate. It carries out the reaction [ThiS sulfur-carrier protein]-C-terminal Gly-Gly-AMP + S-sulfanyl-L-cysteinyl-[cysteine desulfurase] + AH2 = [ThiS sulfur-carrier protein]-C-terminal-Gly-aminoethanethioate + L-cysteinyl-[cysteine desulfurase] + A + AMP + 2 H(+). Its pathway is cofactor biosynthesis; thiamine diphosphate biosynthesis. In terms of biological role, catalyzes the ATP-dependent transfer of a sulfur to tRNA to produce 4-thiouridine in position 8 of tRNAs, which functions as a near-UV photosensor. Also catalyzes the transfer of sulfur to the sulfur carrier protein ThiS, forming ThiS-thiocarboxylate. This is a step in the synthesis of thiazole, in the thiamine biosynthesis pathway. The sulfur is donated as persulfide by IscS. The polypeptide is Probable tRNA sulfurtransferase (Bacillus cereus (strain ATCC 14579 / DSM 31 / CCUG 7414 / JCM 2152 / NBRC 15305 / NCIMB 9373 / NCTC 2599 / NRRL B-3711)).